The chain runs to 189 residues: Putative L,D-transpeptidase in ATP synthase subunits region ORF 5 (189 aa).

Residues 1 to 35 (MTDTLNRRAAMALGLASAAGAALATPALSQDAAPA) constitute a signal peptide (tat-type signal). One can recognise a L,D-TPase catalytic domain in the interval 59–189 (PMLVADTFSR…CPVGTRVRVI (131 aa)). The active-site Proton donor/acceptor is histidine 149. Residue cysteine 165 is the Nucleophile of the active site.

It belongs to the YkuD family. Post-translationally, predicted to be exported by the Tat system. The position of the signal peptide cleavage has not been experimentally proven.

It participates in cell wall biogenesis; peptidoglycan biosynthesis. The polypeptide is Putative L,D-transpeptidase in ATP synthase subunits region ORF 5 (Fuscovulum blasticum (Rhodobacter blasticus)).